The chain runs to 338 residues: MSTLRLLLSDSYDPWFNLAVEECIFRQMPATQRVLFLWRNADTVVIGRAQNPWKECNTRRMEEDHVRLARRSSGGGAVFHDLGNTCFTFMAGKPEYDKTVSTAIVLAALNSLGVTAEASGRNDLVVKTDSGDRKVSGSAYRETIDRGFHHGTLLLNADLSRLANYLNPDQKKLQAKGITSVRGRVANLVELLPGITHQHICEAIQEAFFSHYGERVDAEVISPDNTPDLPNFAETFARQSSWEWNFGQAPAFSHLLDERFRWGGVELHFDVEKGHITRTQAFTDSLNPAPLEALAARLVGCQYRAEVLLQQCEALVGDFPEQEAELKELSAWMAGAVR.

Residues 29-216 (PATQRVLFLW…AFFSHYGERV (188 aa)) form the BPL/LPL catalytic domain. Residues arginine 71, 76–79 (GAVF), and lysine 134 contribute to the ATP site. Position 134 (lysine 134) interacts with (R)-lipoate.

It belongs to the LplA family. Monomer.

Its subcellular location is the cytoplasm. It catalyses the reaction L-lysyl-[lipoyl-carrier protein] + (R)-lipoate + ATP = N(6)-[(R)-lipoyl]-L-lysyl-[lipoyl-carrier protein] + AMP + diphosphate + H(+). Its pathway is protein modification; protein lipoylation via exogenous pathway; protein N(6)-(lipoyl)lysine from lipoate: step 1/2. It participates in protein modification; protein lipoylation via exogenous pathway; protein N(6)-(lipoyl)lysine from lipoate: step 2/2. Its function is as follows. Catalyzes both the ATP-dependent activation of exogenously supplied lipoate to lipoyl-AMP and the transfer of the activated lipoyl onto the lipoyl domains of lipoate-dependent enzymes. In Klebsiella pneumoniae (strain 342), this protein is Lipoate-protein ligase A.